Reading from the N-terminus, the 631-residue chain is Phosphomethylpyrimidine synthase (631 aa).

Residues N239, M268, Y297, H333, 353-355, 394-397, and E433 each bind substrate; these read SRG and DGLR. Position 437 (H437) interacts with Zn(2+). Substrate is bound at residue Y460. A Zn(2+)-binding site is contributed by H501. [4Fe-4S] cluster contacts are provided by C581, C584, and C589.

It belongs to the ThiC family. As to quaternary structure, homodimer. [4Fe-4S] cluster serves as cofactor.

The enzyme catalyses 5-amino-1-(5-phospho-beta-D-ribosyl)imidazole + S-adenosyl-L-methionine = 4-amino-2-methyl-5-(phosphooxymethyl)pyrimidine + CO + 5'-deoxyadenosine + formate + L-methionine + 3 H(+). It participates in cofactor biosynthesis; thiamine diphosphate biosynthesis. Its function is as follows. Catalyzes the synthesis of the hydroxymethylpyrimidine phosphate (HMP-P) moiety of thiamine from aminoimidazole ribotide (AIR) in a radical S-adenosyl-L-methionine (SAM)-dependent reaction. The polypeptide is Phosphomethylpyrimidine synthase (Escherichia coli O45:K1 (strain S88 / ExPEC)).